A 342-amino-acid polypeptide reads, in one-letter code: Thioredoxin reductase 2, mitochondrial (342 aa).

A mitochondrion-targeting transit peptide spans 1–23; it reads MIKHIVSPFRTNFVGISKSVLSR. FAD-binding positions include 34-37, 56-68, 63-64, Gln-68, Asn-77, Val-110, Cys-168, Asp-311, 311-320, and 318-320; these read SGPA, EGMM…AGGQ, IA, DVQDSRYRQA, and RQA. Cys-165 and Cys-168 form a disulfide bridge.

It belongs to the class-II pyridine nucleotide-disulfide oxidoreductase family. In terms of assembly, homodimer. It depends on FAD as a cofactor.

It is found in the mitochondrion. It catalyses the reaction [thioredoxin]-dithiol + NADP(+) = [thioredoxin]-disulfide + NADPH + H(+). Functionally, acts on mitochondrial thioredoxin 3. Implicated in the defense against oxidative stress. The protein is Thioredoxin reductase 2, mitochondrial of Saccharomyces cerevisiae (strain ATCC 204508 / S288c) (Baker's yeast).